The sequence spans 173 residues: Shikimate kinase (173 aa).

Position 14–19 (G14–T19) interacts with ATP. S18 is a Mg(2+) binding site. The substrate site is built by D36, R60, and G82. Residue K120 coordinates ATP. A substrate-binding site is contributed by R140.

Belongs to the shikimate kinase family. In terms of assembly, monomer. Mg(2+) is required as a cofactor.

It localises to the cytoplasm. It carries out the reaction shikimate + ATP = 3-phosphoshikimate + ADP + H(+). It functions in the pathway metabolic intermediate biosynthesis; chorismate biosynthesis; chorismate from D-erythrose 4-phosphate and phosphoenolpyruvate: step 5/7. In terms of biological role, catalyzes the specific phosphorylation of the 3-hydroxyl group of shikimic acid using ATP as a cosubstrate. The protein is Shikimate kinase (aroK) of Wigglesworthia glossinidia brevipalpis.